The sequence spans 329 residues: Mo25-like protein (329 aa).

It belongs to the Mo25 family.

This is Mo25-like protein (pmo25) from Schizosaccharomyces pombe (strain 972 / ATCC 24843) (Fission yeast).